Reading from the N-terminus, the 232-residue chain is Ribonuclease 3 (232 aa).

In terms of domain architecture, RNase III spans 5–134; that stretch reads KKALLEQFDL…FLGALLLDKG (130 aa). Residue glutamate 47 coordinates Mg(2+). The active site involves aspartate 51. Residues aspartate 120 and glutamate 123 each contribute to the Mg(2+) site. Glutamate 123 is a catalytic residue. One can recognise a DRBM domain in the interval 160–229; the sequence is DYKTKLQELL…AKNAFEKESS (70 aa). Positions 203-232 are disordered; sequence KSGQGQGRSKKLAEQEAAKNAFEKESSSCF. The span at 213–232 shows a compositional bias: basic and acidic residues; that stretch reads KLAEQEAAKNAFEKESSSCF.

Belongs to the ribonuclease III family. In terms of assembly, homodimer. It depends on Mg(2+) as a cofactor.

It localises to the cytoplasm. The enzyme catalyses Endonucleolytic cleavage to 5'-phosphomonoester.. Functionally, digests double-stranded RNA. Involved in the processing of primary rRNA transcript to yield the immediate precursors to the large and small rRNAs (23S and 16S). Processes some mRNAs, and tRNAs when they are encoded in the rRNA operon. Processes pre-crRNA and tracrRNA of type II CRISPR loci if present in the organism. This is Ribonuclease 3 from Streptococcus sanguinis (strain SK36).